Consider the following 162-residue polypeptide: NADH-quinone oxidoreductase subunit I (162 aa).

2 4Fe-4S ferredoxin-type domains span residues 52–82 (LRRY…IEAG) and 93–122 (TRYD…EGPN). [4Fe-4S] cluster contacts are provided by cysteine 62, cysteine 65, cysteine 68, cysteine 72, cysteine 102, cysteine 105, cysteine 108, and cysteine 112.

This sequence belongs to the complex I 23 kDa subunit family. In terms of assembly, NDH-1 is composed of 14 different subunits. Subunits NuoA, H, J, K, L, M, N constitute the membrane sector of the complex. [4Fe-4S] cluster is required as a cofactor.

It is found in the cell inner membrane. The catalysed reaction is a quinone + NADH + 5 H(+)(in) = a quinol + NAD(+) + 4 H(+)(out). In terms of biological role, NDH-1 shuttles electrons from NADH, via FMN and iron-sulfur (Fe-S) centers, to quinones in the respiratory chain. The immediate electron acceptor for the enzyme in this species is believed to be ubiquinone. Couples the redox reaction to proton translocation (for every two electrons transferred, four hydrogen ions are translocated across the cytoplasmic membrane), and thus conserves the redox energy in a proton gradient. The sequence is that of NADH-quinone oxidoreductase subunit I from Methylobacterium radiotolerans (strain ATCC 27329 / DSM 1819 / JCM 2831 / NBRC 15690 / NCIMB 10815 / 0-1).